The following is a 382-amino-acid chain: Flap endonuclease 1 (382 aa).

The N-domain stretch occupies residues methionine 1–arginine 105. Mg(2+) is bound at residue aspartate 34. DNA contacts are provided by arginine 47 and arginine 71. Residues aspartate 87, glutamate 156, glutamate 158, aspartate 177, and aspartate 179 each contribute to the Mg(2+) site. Positions glutamate 120–histidine 251 are I-domain. Glutamate 156 is a binding site for DNA. The DNA site is built by glycine 229 and aspartate 231. Aspartate 231 contributes to the Mg(2+) binding site. Positions isoleucine 339 to phenylalanine 347 are interaction with PCNA. Residues alanine 358 to arginine 382 are disordered. The span at leucine 370–arginine 382 shows a compositional bias: basic residues.

The protein belongs to the XPG/RAD2 endonuclease family. FEN1 subfamily. As to quaternary structure, interacts with PCNA. Three molecules of RAD27 bind to one PCNA trimer with each molecule binding to one PCNA monomer. PCNA stimulates the nuclease activity without altering cleavage specificity. Mg(2+) is required as a cofactor. In terms of processing, phosphorylated. Phosphorylation upon DNA damage induces relocalization to the nuclear plasma.

It localises to the nucleus. The protein resides in the nucleolus. It is found in the nucleoplasm. Its subcellular location is the mitochondrion. In terms of biological role, structure-specific nuclease with 5'-flap endonuclease and 5'-3' exonuclease activities involved in DNA replication and repair. During DNA replication, cleaves the 5'-overhanging flap structure that is generated by displacement synthesis when DNA polymerase encounters the 5'-end of a downstream Okazaki fragment. It enters the flap from the 5'-end and then tracks to cleave the flap base, leaving a nick for ligation. Also involved in the long patch base excision repair (LP-BER) pathway, by cleaving within the apurinic/apyrimidinic (AP) site-terminated flap. Acts as a genome stabilization factor that prevents flaps from equilibrating into structures that lead to duplications and deletions. Also possesses 5'-3' exonuclease activity on nicked or gapped double-stranded DNA, and exhibits RNase H activity. Also involved in replication and repair of rDNA and in repairing mitochondrial DNA. This chain is Flap endonuclease 1, found in Saccharomyces cerevisiae (strain YJM789) (Baker's yeast).